The sequence spans 854 residues: Envelope glycoprotein B (854 aa).

Positions 1–30 (MSKNWFPLLCASVLVVYVSIASSSTGTASG) are cleaved as a signal peptide. The Virion surface portion of the chain corresponds to 31–723 (AVTPTSPTEN…EGVVGFIKNP (693 aa)). N-linked (GlcNAc...) asparagine; by host glycans are attached at residues asparagine 40, asparagine 48, and asparagine 60. 5 cysteine pairs are disulfide-bonded: cysteine 69–cysteine 524, cysteine 86–cysteine 480, cysteine 160–cysteine 225, cysteine 317–cysteine 364, and cysteine 546–cysteine 583. An involved in fusion and/or binding to host membrane region spans residues 127 to 133 (SYSFIRE). An N-linked (GlcNAc...) asparagine; by host glycan is attached at asparagine 183. Residues 212 to 219 (GSTWLYTT) are involved in fusion and/or binding to host membrane. N-linked (GlcNAc...) asparagine; by host glycosylation is found at asparagine 256, asparagine 275, asparagine 314, asparagine 356, asparagine 378, asparagine 382, asparagine 390, asparagine 423, asparagine 426, asparagine 442, asparagine 558, and asparagine 595. 2 hydrophobic membrane proximal region regions span residues 669 to 721 (VEGK…GFIK) and 700 to 720 (VAIG…VGFI). The helical transmembrane segment at 724-744 (FGSFTVILFLLAVLGVIYLIY) threads the bilayer. Residues 745 to 854 (MRQKRAYEKP…YQKIQNEYEV (110 aa)) lie on the Intravirion side of the membrane.

It belongs to the herpesviridae glycoprotein B family. In terms of assembly, homotrimer; disulfide-linked. Binds to heparan sulfate proteoglycans. Interacts with gH/gL heterodimer. Post-translationally, a proteolytic cleavage by host furin generates two subunits that remain linked by disulfide bonds.

It is found in the virion membrane. It localises to the host cell membrane. Its subcellular location is the host endosome membrane. The protein resides in the host Golgi apparatus membrane. In terms of biological role, envelope glycoprotein that forms spikes at the surface of virion envelope. Essential for the initial attachment to heparan sulfate moieties of the host cell surface proteoglycans. Involved in fusion of viral and cellular membranes leading to virus entry into the host cell. Following initial binding to its host receptors, membrane fusion is mediated by the fusion machinery composed at least of gB and the heterodimer gH/gL. May be involved in the fusion between the virion envelope and the outer nuclear membrane during virion egress. This is Envelope glycoprotein B from Macaca mulatta (Rhesus macaque).